The chain runs to 201 residues: Achaete-scute complex protein T5 (201 aa).

Positions 1–10 are enriched in polar residues; sequence MALGSENHSV. The segment at 1–32 is disordered; the sequence is MALGSENHSVFNDDEESSSAFNGPSVIRRNAR. In terms of domain architecture, bHLH spans 24-90; sequence PSVIRRNARE…KMAVEYIRRL (67 aa).

As to quaternary structure, efficient DNA binding requires dimerization with another bHLH protein. L(1)SC, SC and AC strongly label the presumptive stomatogastric nervous system, while ASE is more prominent in the presumptive procephalic lobe.

Its function is as follows. AS-C proteins are involved in the determination of the neuronal precursors in the peripheral nervous system and the central nervous system. This Drosophila melanogaster (Fruit fly) protein is Achaete-scute complex protein T5 (ac).